The primary structure comprises 349 residues: Glycosyltransferase 8 domain-containing protein 2 (349 aa).

Over 1–6 the chain is Cytoplasmic; sequence MALLRK. The chain crosses the membrane as a helical; Signal-anchor for type II membrane protein span at residues 7–24; that stretch reads INQVLLFLLIVTLCVILY. Topologically, residues 25-349 are lumenal; the sequence is KKVHKGTVSK…AGIFKLNHHS (325 aa). An N-linked (GlcNAc...) asparagine glycan is attached at asparagine 234.

Belongs to the glycosyltransferase 8 family.

The protein resides in the membrane. The chain is Glycosyltransferase 8 domain-containing protein 2 (GLT8D2) from Macaca fascicularis (Crab-eating macaque).